Here is a 151-residue protein sequence, read N- to C-terminus: UPF0178 protein Tcr_1995 (151 aa).

The disordered stretch occupies residues 116–135 (RSSGVDTGGPPPLNQKDRQA).

Belongs to the UPF0178 family.

This is UPF0178 protein Tcr_1995 from Hydrogenovibrio crunogenus (strain DSM 25203 / XCL-2) (Thiomicrospira crunogena).